We begin with the raw amino-acid sequence, 592 residues long: UPF0329 protein ECU01_0110/ECU01_1500/ECU08_0040 (592 aa).

Composition is skewed to basic and acidic residues over residues 306 to 339 (RQRR…SKEK) and 353 to 362 (EAKEEEKKES). A disordered region spans residues 306 to 404 (RQRRREREIE…RKRYKIHRRV (99 aa)).

Belongs to the UPF0329 family.

The polypeptide is UPF0329 protein ECU01_0110/ECU01_1500/ECU08_0040 (Encephalitozoon cuniculi (strain GB-M1) (Microsporidian parasite)).